Consider the following 557-residue polypeptide: Potassium-transporting ATPase potassium-binding subunit (557 aa).

The next 12 membrane-spanning stretches (helical) occupy residues 5 to 25 (GFLL…PLGS), 63 to 83 (LSAI…MLLG), 132 to 152 (GLTV…FALI), 170 to 190 (LLRI…LFFI), 253 to 273 (FVQM…FGEV), 283 to 303 (LLWA…WAEV), 329 to 349 (VLVS…AVIA), 356 to 376 (ALGG…FGGV), 379 to 399 (GLYG…LMIG), 416 to 436 (LTAL…ALAM), 484 to 504 (LLAL…MAIA), and 526 to 546 (LFVG…FIPA).

Belongs to the KdpA family. The system is composed of three essential subunits: KdpA, KdpB and KdpC.

It localises to the cell inner membrane. Functionally, part of the high-affinity ATP-driven potassium transport (or Kdp) system, which catalyzes the hydrolysis of ATP coupled with the electrogenic transport of potassium into the cytoplasm. This subunit binds the periplasmic potassium ions and delivers the ions to the membrane domain of KdpB through an intramembrane tunnel. This chain is Potassium-transporting ATPase potassium-binding subunit, found in Escherichia coli O127:H6 (strain E2348/69 / EPEC).